Consider the following 163-residue polypeptide: Lipoprotein signal peptidase (163 aa).

4 helical membrane-spanning segments follow: residues V5–L25, I37–L57, L67–S87, and L91–Y111. Catalysis depends on residues D121 and D139. A helical membrane pass occupies residues W132–Y152.

This sequence belongs to the peptidase A8 family.

The protein localises to the cell inner membrane. The enzyme catalyses Release of signal peptides from bacterial membrane prolipoproteins. Hydrolyzes -Xaa-Yaa-Zaa-|-(S,diacylglyceryl)Cys-, in which Xaa is hydrophobic (preferably Leu), and Yaa (Ala or Ser) and Zaa (Gly or Ala) have small, neutral side chains.. The protein operates within protein modification; lipoprotein biosynthesis (signal peptide cleavage). Functionally, this protein specifically catalyzes the removal of signal peptides from prolipoproteins. This chain is Lipoprotein signal peptidase, found in Sulfurihydrogenibium sp. (strain YO3AOP1).